The sequence spans 305 residues: Putative S-adenosyl-L-methionine-dependent methyltransferase MAB_4607c (305 aa).

S-adenosyl-L-methionine is bound by residues aspartate 128 and 155 to 156 (DL).

The protein belongs to the UPF0677 family.

In terms of biological role, exhibits S-adenosyl-L-methionine-dependent methyltransferase activity. The sequence is that of Putative S-adenosyl-L-methionine-dependent methyltransferase MAB_4607c from Mycobacteroides abscessus (strain ATCC 19977 / DSM 44196 / CCUG 20993 / CIP 104536 / JCM 13569 / NCTC 13031 / TMC 1543 / L948) (Mycobacterium abscessus).